Reading from the N-terminus, the 424-residue chain is Cytoplasmic tRNA 2-thiolation protein 2 (424 aa).

The segment at 357–385 is disordered; the sequence is PAAPETEEEEELSKKAHMEKSQEKTGDAD. Residues 368–385 are compositionally biased toward basic and acidic residues; sequence LSKKAHMEKSQEKTGDAD.

The protein belongs to the CTU2/NCS2 family.

Its subcellular location is the cytoplasm. It participates in tRNA modification; 5-methoxycarbonylmethyl-2-thiouridine-tRNA biosynthesis. Plays a central role in 2-thiolation of mcm(5)S(2)U at tRNA wobble positions of tRNA(Lys), tRNA(Glu) and tRNA(Gln). May act by forming a heterodimer with NCS6 that ligates sulfur from thiocarboxylated URM1 onto the uridine of tRNAs at wobble position. Prior mcm(5) tRNA modification by the elongator complex is required for 2-thiolation. May also be involved in protein urmylation. This is Cytoplasmic tRNA 2-thiolation protein 2 from Yarrowia lipolytica (strain CLIB 122 / E 150) (Yeast).